The primary structure comprises 289 residues: MKKVPGPIVLVEPLSGNTSLLIKVNEVLAVRRSRYQEIMVVETEDYGRALILDDYIQSSYYDEAFYHESLVHPAMVTHPAPRDVLILGGGEGATLREVLKHPTVEKAVMVDIDGDVVELSKRFLPQMHQGAFDSPRAEVVIEDGFVYVKRALEEGRKFDVVIMDLTDPYSSEIAKQLYTAEFINQIMKLLRGDGIMVTQAGNSFYFPEAYDMVLSAVKANFPVVAEYNVWIPSFGYAVNYILGSLKYDPRALPAEEVDKRLADRGVKTRFYTGRAHVALMNMPVYRRLR.

The region spanning 5–245 is the PABS domain; sequence PGPIVLVEPL…YAVNYILGSL (241 aa). Glutamine 36 contacts S-methyl-5'-thioadenosine. Spermidine-binding residues include histidine 67 and glutamate 91. S-methyl-5'-thioadenosine is bound by residues aspartate 111 and 143–144; that span reads DG. The active-site Proton acceptor is aspartate 164.

Belongs to the spermidine/spermine synthase family. Homodimer or homotetramer.

It localises to the cytoplasm. It catalyses the reaction S-adenosyl 3-(methylsulfanyl)propylamine + putrescine = S-methyl-5'-thioadenosine + spermidine + H(+). Its pathway is amine and polyamine biosynthesis; spermidine biosynthesis; spermidine from putrescine: step 1/1. Its function is as follows. Catalyzes the irreversible transfer of a propylamine group from the amino donor S-adenosylmethioninamine (decarboxy-AdoMet) to putrescine (1,4-diaminobutane) to yield spermidine. The chain is Polyamine aminopropyltransferase from Pyrobaculum arsenaticum (strain DSM 13514 / JCM 11321 / PZ6).